Reading from the N-terminus, the 415-residue chain is Na(+)-translocating NADH-quinone reductase subunit B (415 aa).

4 helical membrane-spanning segments follow: residues 23–40 (WFALYEAAATLFYTPGLV), 56–76 (IMIMVWLAVFPAMFWGMYNAG), 129–149 (FLPIYATVFIVGGFWEVLFCM), and 164–184 (ILFALIVPPTLPLWQAALGIT). T236 carries the post-translational modification FMN phosphoryl threonine. Helical transmembrane passes span 275–295 (VSTLALMIGAAFIVYMGIASW), 297–317 (IIGGVMIGMILLSTLFNVIGS), 325–345 (MPWHWHLVLGGFAFGMFFMAT), 358–378 (WAYGILIGVMCVLIRVVNPAY), and 381–401 (GMMLAILFANLFAPLFDHVVV).

This sequence belongs to the NqrB/RnfD family. Composed of six subunits; NqrA, NqrB, NqrC, NqrD, NqrE and NqrF. It depends on riboflavin as a cofactor. The cofactor is FMN.

Its subcellular location is the cell inner membrane. The catalysed reaction is a ubiquinone + n Na(+)(in) + NADH + H(+) = a ubiquinol + n Na(+)(out) + NAD(+). Functionally, NQR complex catalyzes the reduction of ubiquinone-1 to ubiquinol by two successive reactions, coupled with the transport of Na(+) ions from the cytoplasm to the periplasm. NqrA to NqrE are probably involved in the second step, the conversion of ubisemiquinone to ubiquinol. This chain is Na(+)-translocating NADH-quinone reductase subunit B, found in Vibrio cholerae serotype O1 (strain ATCC 39541 / Classical Ogawa 395 / O395).